Here is a 35-residue protein sequence, read N- to C-terminus: Photosystem II reaction center protein M (35 aa).

Residues 7–27 (GFIATILFVLVPTVFLLILYI) form a helical membrane-spanning segment.

Belongs to the PsbM family. PSII is composed of 1 copy each of membrane proteins PsbA, PsbB, PsbC, PsbD, PsbE, PsbF, PsbH, PsbI, PsbJ, PsbK, PsbL, PsbM, PsbT, PsbX, PsbY, PsbZ, Psb30/Ycf12, peripheral proteins PsbO, CyanoQ (PsbQ), PsbU, PsbV and a large number of cofactors. It forms dimeric complexes.

The protein localises to the cellular thylakoid membrane. In terms of biological role, one of the components of the core complex of photosystem II (PSII). PSII is a light-driven water:plastoquinone oxidoreductase that uses light energy to abstract electrons from H(2)O, generating O(2) and a proton gradient subsequently used for ATP formation. It consists of a core antenna complex that captures photons, and an electron transfer chain that converts photonic excitation into a charge separation. This subunit is found at the monomer-monomer interface. The polypeptide is Photosystem II reaction center protein M (Crocosphaera subtropica (strain ATCC 51142 / BH68) (Cyanothece sp. (strain ATCC 51142))).